We begin with the raw amino-acid sequence, 78 residues long: Large ribosomal subunit protein bL28 (78 aa).

The protein belongs to the bacterial ribosomal protein bL28 family.

In Prochlorococcus marinus (strain MIT 9301), this protein is Large ribosomal subunit protein bL28.